The chain runs to 272 residues: 2-C-methyl-D-erythritol 4-phosphate cytidylyltransferase (272 aa).

The protein belongs to the IspD/TarI cytidylyltransferase family. IspD subfamily.

It carries out the reaction 2-C-methyl-D-erythritol 4-phosphate + CTP + H(+) = 4-CDP-2-C-methyl-D-erythritol + diphosphate. It functions in the pathway isoprenoid biosynthesis; isopentenyl diphosphate biosynthesis via DXP pathway; isopentenyl diphosphate from 1-deoxy-D-xylulose 5-phosphate: step 2/6. In terms of biological role, catalyzes the formation of 4-diphosphocytidyl-2-C-methyl-D-erythritol from CTP and 2-C-methyl-D-erythritol 4-phosphate (MEP). In Xanthomonas oryzae pv. oryzae (strain PXO99A), this protein is 2-C-methyl-D-erythritol 4-phosphate cytidylyltransferase.